A 521-amino-acid chain; its full sequence is Bifunctional dihydrofolate reductase-thymidylate synthase (521 aa).

The region spanning 22-232 (AFSLVVAVDE…TKYYFEKLIP (211 aa)) is the DHFR domain. V26 contacts substrate. NADP(+) contacts are provided by residues A28 and 34 to 40 (GIGDGRS). D48 contributes to the substrate binding site. NADP(+)-binding positions include 78–80 (RKT) and 99–102 (LSST). Substrate is bound by residues I154, Y160, and T178. 155–162 (GGGSVYAE) provides a ligand contact to NADP(+). A thymidylate synthase region spans residues 237–521 (EEQYLSLVDR…YPPISMKMAV (285 aa)). R257 is a dUMP binding site. The active site involves C403. Residues H404, 422–426 (QRSCD), N434, and 464–466 (HVY) each bind dUMP.

In the N-terminal section; belongs to the dihydrofolate reductase family. The protein in the C-terminal section; belongs to the thymidylate synthase family. Homodimer.

It carries out the reaction (6S)-5,6,7,8-tetrahydrofolate + NADP(+) = 7,8-dihydrofolate + NADPH + H(+). The catalysed reaction is dUMP + (6R)-5,10-methylene-5,6,7,8-tetrahydrofolate = 7,8-dihydrofolate + dTMP. It participates in cofactor biosynthesis; tetrahydrofolate biosynthesis; 5,6,7,8-tetrahydrofolate from 7,8-dihydrofolate: step 1/1. In terms of biological role, bifunctional enzyme. Involved in de novo dTMP biosynthesis. Key enzyme in folate metabolism. Catalyzes an essential reaction for de novo glycine and purine synthesis, DNA precursor synthesis, and for the conversion of dUMP to dTMP. The polypeptide is Bifunctional dihydrofolate reductase-thymidylate synthase (Trypanosoma cruzi).